The following is a 247-amino-acid chain: Dihydroorotate dehydrogenase B (NAD(+)), electron transfer subunit (247 aa).

Positions 2–96 (RWKMKARVLS…TGPHGNGFEI (95 aa)) constitute an FAD-binding FR-type domain. FAD contacts are provided by residues 49 to 52 (RPFS), 64 to 66 (LYQ), and 71 to 72 (GT). Residues Cys-210, Cys-215, Cys-218, and Cys-234 each contribute to the [2Fe-2S] cluster site.

It belongs to the PyrK family. Heterotetramer of 2 PyrK and 2 PyrD type B subunits. [2Fe-2S] cluster is required as a cofactor. It depends on FAD as a cofactor.

It functions in the pathway pyrimidine metabolism; UMP biosynthesis via de novo pathway; orotate from (S)-dihydroorotate (NAD(+) route): step 1/1. Its function is as follows. Responsible for channeling the electrons from the oxidation of dihydroorotate from the FMN redox center in the PyrD type B subunit to the ultimate electron acceptor NAD(+). The protein is Dihydroorotate dehydrogenase B (NAD(+)), electron transfer subunit of Caldanaerobacter subterraneus subsp. tengcongensis (strain DSM 15242 / JCM 11007 / NBRC 100824 / MB4) (Thermoanaerobacter tengcongensis).